We begin with the raw amino-acid sequence, 68 residues long: uncharacterized protein (68 aa).

This is an uncharacterized protein from Archaeoglobus fulgidus (strain ATCC 49558 / DSM 4304 / JCM 9628 / NBRC 100126 / VC-16).